The following is a 441-amino-acid chain: Glutamyl-tRNA reductase (441 aa).

Residues 47–50, serine 110, 115–117, and glutamine 121 each bind substrate; these read TCNR and ERE. Cysteine 48 serves as the catalytic Nucleophile. NADP(+) is bound at residue 192–197; it reads GTGAYA.

Belongs to the glutamyl-tRNA reductase family. In terms of assembly, homodimer.

The enzyme catalyses (S)-4-amino-5-oxopentanoate + tRNA(Glu) + NADP(+) = L-glutamyl-tRNA(Glu) + NADPH + H(+). It participates in porphyrin-containing compound metabolism; protoporphyrin-IX biosynthesis; 5-aminolevulinate from L-glutamyl-tRNA(Glu): step 1/2. Catalyzes the NADPH-dependent reduction of glutamyl-tRNA(Glu) to glutamate 1-semialdehyde (GSA). The protein is Glutamyl-tRNA reductase of Pseudarthrobacter chlorophenolicus (strain ATCC 700700 / DSM 12829 / CIP 107037 / JCM 12360 / KCTC 9906 / NCIMB 13794 / A6) (Arthrobacter chlorophenolicus).